Reading from the N-terminus, the 125-residue chain is Cystatin-like cysteine protease inhibitor EPIC2B (125 aa).

Residues 1–21 (MSFLRPTLALLAVTALVTTSA) form the signal peptide. N-linked (GlcNAc...) asparagine glycosylation is present at asparagine 45. The Secondary area of contact signature appears at 68-72 (QVVSG).

It belongs to the cystatin family. As to quaternary structure, interacts with the host papain-like cysteine protease PIP1. Interacts with the host papain-like cysteine protease RCR3. Interacts with the host papain-like cysteine protease C14.

The protein resides in the secreted. Functionally, secreted effector that interacts with and inhibits the pathogenesis-related papain-like cysteine proteases C14, PIP1 and RCR3 of host plants. Inhibition of host proteases by a pathogen extracellular protease inhibitor forms a specific type of defense-counterdefense mechanism between plants and microbial pathogens. This is Cystatin-like cysteine protease inhibitor EPIC2B from Phytophthora infestans (strain T30-4) (Potato late blight agent).